Consider the following 309-residue polypeptide: Protease HtpX homolog (309 aa).

2 helical membrane passes run 15-35 and 54-74; these read NAVL…VDVI and IFPT…VVCI. Zn(2+) is bound at residue H165. Residue E166 is part of the active site. H169 lines the Zn(2+) pocket. The next 2 membrane-spanning stretches (helical) occupy residues 181 to 201 and 213 to 233; these read VGIL…FFMG and MILL…QMYL. A Zn(2+)-binding site is contributed by E238.

Belongs to the peptidase M48B family. Requires Zn(2+) as cofactor.

The protein localises to the cell inner membrane. The protein is Protease HtpX homolog of Helicobacter acinonychis (strain Sheeba).